We begin with the raw amino-acid sequence, 153 residues long: Large ribosomal subunit protein uL29 (153 aa).

Residues 1-83 form a large ribosomal subunit protein uL29 region; sequence MNKELRAKTN…KEQTKQKEIQ (83 aa). The unknown stretch occupies residues 84 to 153; sequence ESVKKIKQLR…NVKAKTKKKG (70 aa). The segment covering 100–121 has biased composition (basic and acidic residues); the sequence is NKEKRLANAEKVKAAPKPEQKT. A disordered region spans residues 100–153; it reads NKEKRLANAEKVKAAPKPEQKTKKVKKAPKKTETVKPTTNKNKKNVKAKTKKKG. Basic residues predominate over residues 140–153; sequence KNKKNVKAKTKKKG.

The protein belongs to the universal ribosomal protein uL29 family.

The chain is Large ribosomal subunit protein uL29 from Mycoplasmoides gallisepticum (strain R(low / passage 15 / clone 2)) (Mycoplasma gallisepticum).